Consider the following 967-residue polypeptide: Leucine--tRNA ligase (967 aa).

Positions 43-53 match the 'HIGH' region motif; the sequence is PYLSGHLHVGH. The 'KMSKS' region motif lies at 650–654; sequence KMSKS. Lysine 653 serves as a coordination point for ATP.

It belongs to the class-I aminoacyl-tRNA synthetase family.

It is found in the cytoplasm. The catalysed reaction is tRNA(Leu) + L-leucine + ATP = L-leucyl-tRNA(Leu) + AMP + diphosphate. The chain is Leucine--tRNA ligase from Pyrococcus abyssi (strain GE5 / Orsay).